The following is a 357-amino-acid chain: Fructose-bisphosphate aldolase, cytoplasmic isozyme (357 aa).

Substrate contacts are provided by Arg-53 and Lys-142. Catalysis depends on Glu-183, which acts as the Proton acceptor. Lys-225 (schiff-base intermediate with dihydroxyacetone-P) is an active-site residue.

Belongs to the class I fructose-bisphosphate aldolase family.

The protein localises to the cytoplasm. The catalysed reaction is beta-D-fructose 1,6-bisphosphate = D-glyceraldehyde 3-phosphate + dihydroxyacetone phosphate. It functions in the pathway carbohydrate degradation; glycolysis; D-glyceraldehyde 3-phosphate and glycerone phosphate from D-glucose: step 4/4. The chain is Fructose-bisphosphate aldolase, cytoplasmic isozyme from Spinacia oleracea (Spinach).